A 356-amino-acid chain; its full sequence is DNA polymerase IV (356 aa).

One can recognise a UmuC domain in the interval 6–187; sequence IIHIDMDYFF…LDIGDFPGVG (182 aa). Residues Asp10 and Asp105 each coordinate Mg(2+). Residue Glu106 is part of the active site.

The protein belongs to the DNA polymerase type-Y family. Monomer. Mg(2+) serves as cofactor.

The protein localises to the cytoplasm. It catalyses the reaction DNA(n) + a 2'-deoxyribonucleoside 5'-triphosphate = DNA(n+1) + diphosphate. Functionally, poorly processive, error-prone DNA polymerase involved in untargeted mutagenesis. Copies undamaged DNA at stalled replication forks, which arise in vivo from mismatched or misaligned primer ends. These misaligned primers can be extended by PolIV. Exhibits no 3'-5' exonuclease (proofreading) activity. May be involved in translesional synthesis, in conjunction with the beta clamp from PolIII. The protein is DNA polymerase IV of Staphylococcus epidermidis (strain ATCC 12228 / FDA PCI 1200).